The sequence spans 38 residues: MTEPNPNKQTVELNRTSLYWGLLLIFVLAILFSNYIFN.

A helical transmembrane segment spans residues 17–37 (SLYWGLLLIFVLAILFSNYIF).

This sequence belongs to the PsbL family. As to quaternary structure, PSII is composed of 1 copy each of membrane proteins PsbA, PsbB, PsbC, PsbD, PsbE, PsbF, PsbH, PsbI, PsbJ, PsbK, PsbL, PsbM, PsbT, PsbX, PsbY, PsbZ, Psb30/Ycf12, at least 3 peripheral proteins of the oxygen-evolving complex and a large number of cofactors. It forms dimeric complexes.

It localises to the plastid. The protein resides in the chloroplast thylakoid membrane. Its function is as follows. One of the components of the core complex of photosystem II (PSII). PSII is a light-driven water:plastoquinone oxidoreductase that uses light energy to abstract electrons from H(2)O, generating O(2) and a proton gradient subsequently used for ATP formation. It consists of a core antenna complex that captures photons, and an electron transfer chain that converts photonic excitation into a charge separation. This subunit is found at the monomer-monomer interface and is required for correct PSII assembly and/or dimerization. This is Photosystem II reaction center protein L from Chlorokybus atmophyticus (Soil alga).